The chain runs to 70 residues: Large ribosomal subunit protein bL31 (70 aa).

Lysine 8 carries the post-translational modification N6-acetyllysine. Zn(2+)-binding residues include cysteine 16, cysteine 18, cysteine 37, and cysteine 40.

This sequence belongs to the bacterial ribosomal protein bL31 family. Type A subfamily. As to quaternary structure, part of the 50S ribosomal subunit. Zn(2+) serves as cofactor.

Its function is as follows. Binds the 23S rRNA. The sequence is that of Large ribosomal subunit protein bL31 from Shigella flexneri.